A 364-amino-acid polypeptide reads, in one-letter code: MIRAFDQLSLPLLRWLDAEDAHRLAIQGLKLLPAVKPRADDAKLAVRAFGLNFPNPVGMAAGFDKNAEVPDALLRLGFGFVEIGSVTPRPQSGNPRPRLFRLERDEAVINRMGFNNDGAEIVLRRLAGRANQGGIVGVNVGANKDSADRVADYVRLIETFAPVASYFTVNISSPNTPGLRNLQQASQLDDLLTKVLEARDRVRRKAGDTPVLLKIAPDLSLAELDDVVHVARSRGVDGMIVSNTTLARPNSLREQMRAKEQGGLSGRPLFRLSTRMVAETFVRVEGAFPLIGVGGIDTGGAALTKIRAGASLIQLYSSLVYKGLGLVESIKADLTSTLLRTGRESLSEIVGADAATITAEDWPV.

FMN is bound by residues 61 to 65 (AGFDK) and S85. K65 serves as a coordination point for substrate. Substrate is bound at residue 110 to 114 (NRMGF). Residues N139 and N170 each contribute to the FMN site. N170 contributes to the substrate binding site. S173 acts as the Nucleophile in catalysis. N175 serves as a coordination point for substrate. FMN-binding residues include K214 and S242. Position 243–244 (243–244 (NT)) interacts with substrate. FMN contacts are provided by residues G266, G295, and 316–317 (YS).

The protein belongs to the dihydroorotate dehydrogenase family. Type 2 subfamily. In terms of assembly, monomer. FMN serves as cofactor.

It localises to the cell membrane. It catalyses the reaction (S)-dihydroorotate + a quinone = orotate + a quinol. The protein operates within pyrimidine metabolism; UMP biosynthesis via de novo pathway; orotate from (S)-dihydroorotate (quinone route): step 1/1. Catalyzes the conversion of dihydroorotate to orotate with quinone as electron acceptor. The polypeptide is Dihydroorotate dehydrogenase (quinone) (Bradyrhizobium sp. (strain ORS 278)).